We begin with the raw amino-acid sequence, 272 residues long: MNTPQDSSLGREVSYPSQYDPGLLFPIPRSGARAEIGLDDAALPFVGHDRWHAFELSWLDPRGKPQVAVATVQVPCTSPRLIESKSFKLYLNSLNSTRIDSVEALRERLVTDLSACAGAPVQVAFGLPGLRETPLGESIDGLDVDIDCYGPPQADFLAADTSQVVEETLVSALLKSNCPVTGQPDWATVSLRYCGPKIDRAGLLRYLVSYREHAEFHEQCVERIFSEVSARCQPQWLEVEARYTRRGGLDINPWRASPGITAPAATYRELRQ.

Residue 82-84 participates in substrate binding; the sequence is IES. 84–85 is a binding site for NADPH; it reads SK. Cys-178 acts as the Thioimide intermediate in catalysis. Asp-185 serves as the catalytic Proton donor. Substrate is bound at residue 217-218; it reads HE. Position 246–247 (246–247) interacts with NADPH; it reads RG.

The protein belongs to the GTP cyclohydrolase I family. QueF type 2 subfamily. As to quaternary structure, homodimer.

Its subcellular location is the cytoplasm. It carries out the reaction 7-aminomethyl-7-carbaguanine + 2 NADP(+) = 7-cyano-7-deazaguanine + 2 NADPH + 3 H(+). It participates in tRNA modification; tRNA-queuosine biosynthesis. Catalyzes the NADPH-dependent reduction of 7-cyano-7-deazaguanine (preQ0) to 7-aminomethyl-7-deazaguanine (preQ1). This is NADPH-dependent 7-cyano-7-deazaguanine reductase from Stenotrophomonas maltophilia (strain R551-3).